The primary structure comprises 80 residues: uncharacterized protein (80 aa).

This is an uncharacterized protein from Schizosaccharomyces pombe (strain 972 / ATCC 24843) (Fission yeast).